Reading from the N-terminus, the 298-residue chain is Protein ABIL1 (298 aa).

This sequence belongs to the ABI family. Binds SCAR2. As to expression, expressed in seedlings, roots, hypocotyls, cotyledons, leaves, stems, and flowers.

The protein localises to the cytoplasm. It is found in the cytoskeleton. Functionally, involved in regulation of actin and microtubule organization. Part of a WAVE complex that activates the Arp2/3 complex. The sequence is that of Protein ABIL1 (ABIL1) from Arabidopsis thaliana (Mouse-ear cress).